A 64-amino-acid chain; its full sequence is Large ribosomal subunit protein bL35 (64 aa).

Positions 1-15 (MPKNKTHSGTAKRFR) are enriched in basic residues. The interval 1-27 (MPKNKTHSGTAKRFRVTGSGKLRREQA) is disordered.

This sequence belongs to the bacterial ribosomal protein bL35 family.

The polypeptide is Large ribosomal subunit protein bL35 (Saccharopolyspora erythraea (strain ATCC 11635 / DSM 40517 / JCM 4748 / NBRC 13426 / NCIMB 8594 / NRRL 2338)).